The following is a 219-amino-acid chain: MASVTDGKTGIKDASDQNFDYMFKLLIIGNSSVGKTSFLFRYADDTFTPAFVSTVGIDFKVKTVYRHEKRVKLQIWDTAGQERYRTITTAYYRGAMGFILMYDITNEESFNAVQDWATQIKTYSWDNAQVILVGNKCDMEEERVVPTEKGRLLAEQLGFDFFEASAKENISVRQAFERLVDAICDKMSDSMDTDPSVLGASKTTRLSDTPPLLQQNCSC.

At A2 the chain carries N-acetylalanine. Residues S31, S32, V33, G34, K35, T36, S37, P49, and S53 each contribute to the GTP site. Position 36 (T36) interacts with Mg(2+). Positions 45–58 match the Switch 1 motif; that stretch reads DTFTPAFVSTVGID. Mg(2+)-binding residues include T54 and D77. A Switch 2 motif is present at residues 78-96; that stretch reads TAGQERYRTITTAYYRGAM. G80 is a binding site for GTP. T86 carries the phosphothreonine; by LRRK2 modification. The GTP site is built by N135, K136, D138, A166, and K167. Residues S188 and S190 each carry the phosphoserine modification. 2 S-geranylgeranyl cysteine lipidation sites follow: C217 and C219. Residue C219 is modified to Cysteine methyl ester.

It belongs to the small GTPase superfamily. Rab family. Interacts with RIMS1, RIMS2, RPH3A and RPH3AL. The GTP-bound form interacts with GAS8/DRC4 (via coiled-coil domains). Interacts with GDI2, CHM and CHML; phosphorylation at Thr-86 disrupts these interactions. Interacts with MADD (via uDENN domain); the GTP-bound form is preferred for interaction. Requires Mg(2+) as cofactor. Phosphorylation of Thr-86 in the switch II region by LRRK2 prevents the association of RAB regulatory proteins, including CHM, CHML and RAB GDP dissociation inhibitor GDI2. In terms of tissue distribution, abundantly expressed in testis, lung and brain.

Its subcellular location is the cell membrane. The protein localises to the golgi apparatus. The enzyme catalyses GTP + H2O = GDP + phosphate + H(+). Regulated by guanine nucleotide exchange factors (GEFs) which promote the exchange of bound GDP for free GTP. Regulated by GTPase activating proteins (GAPs) which increase the GTP hydrolysis activity. Inhibited by GDP dissociation inhibitors (GDIs) which prevent Rab-GDP dissociation. In terms of biological role, the small GTPases Rab are key regulators of intracellular membrane trafficking, from the formation of transport vesicles to their fusion with membranes. Rabs cycle between an inactive GDP-bound form and an active GTP-bound form that is able to recruit to membranes different sets of downstream effectors directly responsible for vesicle formation, movement, tethering and fusion. The sequence is that of Ras-related protein Rab-3B from Mus musculus (Mouse).